A 130-amino-acid polypeptide reads, in one-letter code: Small ribosomal subunit protein uS8 (130 aa).

This sequence belongs to the universal ribosomal protein uS8 family. As to quaternary structure, part of the 30S ribosomal subunit.

One of the primary rRNA binding proteins, it binds directly to 16S rRNA central domain where it helps coordinate assembly of the platform of the 30S subunit. The polypeptide is Small ribosomal subunit protein uS8 (Methanococcus voltae).